Here is a 46-residue protein sequence, read N- to C-terminus: Protein krueppel (46 aa).

3 consecutive C2H2-type zinc fingers follow at residues methionine 1–histidine 4, tyrosine 10–histidine 32, and tyrosine 38–arginine 46.

The protein belongs to the krueppel C2H2-type zinc-finger protein family.

It is found in the nucleus. Functionally, krueppel is a gap class segmentation protein. The polypeptide is Protein krueppel (Kr) (Pholcus phalangioides (Longbodied cellar spider)).